The sequence spans 493 residues: Guanosine-5'-triphosphate,3'-diphosphate pyrophosphatase (493 aa).

This sequence belongs to the GppA/Ppx family. GppA subfamily.

It carries out the reaction guanosine 3'-diphosphate 5'-triphosphate + H2O = guanosine 3',5'-bis(diphosphate) + phosphate + H(+). The protein operates within purine metabolism; ppGpp biosynthesis; ppGpp from GTP: step 2/2. Functionally, catalyzes the conversion of pppGpp to ppGpp. Guanosine pentaphosphate (pppGpp) is a cytoplasmic signaling molecule which together with ppGpp controls the 'stringent response', an adaptive process that allows bacteria to respond to amino acid starvation, resulting in the coordinated regulation of numerous cellular activities. The polypeptide is Guanosine-5'-triphosphate,3'-diphosphate pyrophosphatase (Salmonella paratyphi A (strain ATCC 9150 / SARB42)).